The following is a 212-amino-acid chain: NAD(P)H dehydrogenase (quinone) 3 (212 aa).

One can recognise a Flavodoxin-like domain in the interval 4 to 192 (MLVLYYSSYG…DGARFQGRHV (189 aa)). FMN contacts are provided by residues 10–15 (SSYGHI) and 78–80 (TRF). NAD(+) is bound at residue Tyr-12. Trp-98 serves as a coordination point for substrate. Residues 113-119 (STGSQHG) and His-134 contribute to the FMN site. The segment at 161–182 (YGASTLAEDENHRDRSPSANEL) is disordered.

Belongs to the WrbA family. It depends on FMN as a cofactor.

It carries out the reaction a quinone + NADH + H(+) = a quinol + NAD(+). The catalysed reaction is a quinone + NADPH + H(+) = a quinol + NADP(+). This Rhizobium meliloti (strain 1021) (Ensifer meliloti) protein is NAD(P)H dehydrogenase (quinone) 3.